The primary structure comprises 216 residues: Protein-L-isoaspartate O-methyltransferase (216 aa).

The active site involves Ser66.

Belongs to the methyltransferase superfamily. L-isoaspartyl/D-aspartyl protein methyltransferase family.

It is found in the cytoplasm. The enzyme catalyses [protein]-L-isoaspartate + S-adenosyl-L-methionine = [protein]-L-isoaspartate alpha-methyl ester + S-adenosyl-L-homocysteine. Catalyzes the methyl esterification of L-isoaspartyl residues in peptides and proteins that result from spontaneous decomposition of normal L-aspartyl and L-asparaginyl residues. It plays a role in the repair and/or degradation of damaged proteins. The sequence is that of Protein-L-isoaspartate O-methyltransferase from Dechloromonas aromatica (strain RCB).